The sequence spans 1159 residues: WASH complex subunit 5 (1159 aa).

This sequence belongs to the strumpellin family. As to quaternary structure, component of the WASH core complex also described as WASH regulatory complex (SHRC) composed of WASH (WASHC1, WASH2P or WASH3P), WASHC2 (WASHC2A or WASHC2C), WASHC3, WASHC4 and WASHC5. The WASH core complex associates via WASHC2 with the F-actin-capping protein dimer (formed by CAPZA1, CAPZA2 or CAPZA3 and CAPZB) in a transient or substoichiometric manner which was initially described as WASH complex. Interacts with VCP, PI4K2A.

It is found in the cytoplasm. It localises to the cytosol. Its subcellular location is the endoplasmic reticulum. The protein resides in the early endosome. Its function is as follows. Acts as a component of the WASH core complex that functions as a nucleation-promoting factor (NPF) at the surface of endosomes, where it recruits and activates the Arp2/3 complex to induce actin polymerization, playing a key role in the fission of tubules that serve as transport intermediates during endosome sorting. May be involved in axonal outgrowth. Involved in cellular localization of ADRB2. Involved in cellular trafficking of BLOC-1 complex cargos such as ATP7A and VAMP7. Involved in cytokinesis and following polar body extrusion during oocyte meiotic maturation. This chain is WASH complex subunit 5, found in Mus musculus (Mouse).